The chain runs to 212 residues: Redox-sensing transcriptional repressor Rex (212 aa).

The segment at residues Leu-17 to Phe-56 is a DNA-binding region (H-T-H motif). An NAD(+)-binding site is contributed by Gly-91–Gly-96.

It belongs to the transcriptional regulatory Rex family. As to quaternary structure, homodimer.

It localises to the cytoplasm. In terms of biological role, modulates transcription in response to changes in cellular NADH/NAD(+) redox state. The polypeptide is Redox-sensing transcriptional repressor Rex (Chloroflexus aggregans (strain MD-66 / DSM 9485)).